Reading from the N-terminus, the 133-residue chain is C-C motif chemokine 21a (133 aa).

Residues 1-23 (MAQMMTLSLLSLVLALCIPWTQG) form the signal peptide. Cystine bridges form between cysteine 31–cysteine 57, cysteine 32–cysteine 75, and cysteine 103–cysteine 122. Positions 86 to 133 (LMRRLDQPPAPGKQSPGCRKNRGTSKSGKKGKGSKGCKRTEQTQPSRG) are disordered. The interval 98 to 133 (KQSPGCRKNRGTSKSGKKGKGSKGCKRTEQTQPSRG) is C-terminal basic extension. A compositionally biased stretch (basic residues) spans 104–122 (RKNRGTSKSGKKGKGSKGC).

The protein belongs to the intercrine beta (chemokine CC) family. In terms of assembly, binds to CCR7 and to CXCR3. Interacts with PDPN; relocalizes PDPN to the basolateral membrane. Interacts with GPR174. Expressed strongly in lung, spleen, thymus, peripheral and mesentric lymph nodes. Also expressed in the testis, kidney, liver, and heart.

Its subcellular location is the secreted. Inhibits hemopoiesis and stimulates chemotaxis. Chemotactic in vitro for thymocytes and activated T-cells, but not for B-cells, macrophages, or neutrophils. Potent mesangial cell chemoattractant. Shows preferential activity towards naive T-cells. May play a role in mediating homing of lymphocytes to secondary lymphoid organs. The protein is C-C motif chemokine 21a (Ccl21a) of Mus musculus (Mouse).